We begin with the raw amino-acid sequence, 177 residues long: ATP synthase subunit delta (177 aa).

Belongs to the ATPase delta chain family. In terms of assembly, F-type ATPases have 2 components, F(1) - the catalytic core - and F(0) - the membrane proton channel. F(1) has five subunits: alpha(3), beta(3), gamma(1), delta(1), epsilon(1). F(0) has three main subunits: a(1), b(2) and c(10-14). The alpha and beta chains form an alternating ring which encloses part of the gamma chain. F(1) is attached to F(0) by a central stalk formed by the gamma and epsilon chains, while a peripheral stalk is formed by the delta and b chains.

It localises to the cell inner membrane. In terms of biological role, f(1)F(0) ATP synthase produces ATP from ADP in the presence of a proton or sodium gradient. F-type ATPases consist of two structural domains, F(1) containing the extramembraneous catalytic core and F(0) containing the membrane proton channel, linked together by a central stalk and a peripheral stalk. During catalysis, ATP synthesis in the catalytic domain of F(1) is coupled via a rotary mechanism of the central stalk subunits to proton translocation. This protein is part of the stalk that links CF(0) to CF(1). It either transmits conformational changes from CF(0) to CF(1) or is implicated in proton conduction. This Vibrio vulnificus (strain CMCP6) protein is ATP synthase subunit delta.